We begin with the raw amino-acid sequence, 397 residues long: MAKAKFERSKPHVNIGTIGHVDHGKTTLTAAITTVLAQKGGASATKYDEIDKAPEEKERGITINTSHVEYETANRHYAHVDCPGHADYVKNMITGAAQMDGAILVVSAADGPMPQTREHILLASRVGVQYIVVFLNKADQVDDPELIELVEMEVRELLNEYGFPGDDTPIVVGSALEVLENQDNAEKTKCIDELMEAIDSYIPTPERATDQPFLMPVEDVFTITGRGTVATGRVERGVLHTGDEVELIGMKEEITKTVCTGIEMFRKILDEAMAGDNIGALLRGIQRDEIQRGQVLAKPGSITPHKKFVGQVYVLKKEEGGRHTPFFNGYRPQFYFRTTDVTGSINLPEGVEMVMPGDHIDMAVELITPVAMHENLRFAIREGGRTVGSGVVTTISE.

One can recognise a tr-type G domain in the interval K10–E206. Residues G19–T26 are G1. G19 to T26 lines the GTP pocket. T26 provides a ligand contact to Mg(2+). The segment at G60–N64 is G2. The segment at D81–G84 is G3. Residues D81–H85 and N136–D139 each bind GTP. Residues N136 to D139 are G4. Residues S174–L176 are G5.

The protein belongs to the TRAFAC class translation factor GTPase superfamily. Classic translation factor GTPase family. EF-Tu/EF-1A subfamily. Monomer.

It is found in the cytoplasm. It carries out the reaction GTP + H2O = GDP + phosphate + H(+). Functionally, GTP hydrolase that promotes the GTP-dependent binding of aminoacyl-tRNA to the A-site of ribosomes during protein biosynthesis. This is Elongation factor Tu from Clostridium botulinum (strain Loch Maree / Type A3).